The following is a 78-amino-acid chain: Beta-defensin 29 (78 aa).

A signal peptide spans Met1–Gly23. Cystine bridges form between Cys40–Cys67, Cys47–Cys61, and Cys51–Cys68.

Belongs to the beta-defensin family. As to expression, highly expressed in the cauda epididymis.

It localises to the secreted. In terms of biological role, has antibacterial activity. In Mus musculus (Mouse), this protein is Beta-defensin 29 (Defb29).